The following is a 265-amino-acid chain: Mlc titration factor A (265 aa).

Zn(2+) contacts are provided by His111, His148, His152, and Glu211.

This sequence belongs to the MtfA family. Interacts with Mlc. Requires Zn(2+) as cofactor.

Its subcellular location is the cytoplasm. Its function is as follows. Involved in the modulation of the activity of the glucose-phosphotransferase system (glucose-PTS). Interacts with the transcriptional repressor Mlc, preventing its interaction with DNA and leading to the modulation of expression of genes regulated by Mlc, including ptsG, which encodes the PTS system glucose-specific EIICB component. Shows zinc-dependent metallopeptidase activity. This is Mlc titration factor A from Escherichia coli (strain ATCC 8739 / DSM 1576 / NBRC 3972 / NCIMB 8545 / WDCM 00012 / Crooks).